Consider the following 146-residue polypeptide: Hemoglobin subunit beta (146 aa).

At Val1 the chain carries N-acetylvaline. Residues 2–146 (HLTPEEKSAV…VANALAHKYH (145 aa)) enclose the Globin domain. Position 12 is a phosphothreonine (Thr12). Ser44 is modified (phosphoserine). Position 59 is an N6-acetyllysine (Lys59). Heme b is bound at residue His63. Lys82 is modified (N6-acetyllysine). A heme b-binding site is contributed by His92. The residue at position 93 (Cys93) is an S-nitrosocysteine. At Lys144 the chain carries N6-acetyllysine.

Belongs to the globin family. As to quaternary structure, heterotetramer of two alpha chains and two beta chains. In terms of tissue distribution, red blood cells.

Involved in oxygen transport from the lung to the various peripheral tissues. The sequence is that of Hemoglobin subunit beta (HBB) from Hylobates lar (Lar gibbon).